We begin with the raw amino-acid sequence, 730 residues long: MTENWKFRRRTFLKHGAQAATLAGLSGLFPETLRRALAVEPDIRTGTIQDVQHVVILMQENRSFDHYFGHLNGVRGFNDPRALKRQDGKPVWYQNYKYEFSPYHWDTKVTSAQWVSSQNHEWSAFHAIWNQGRNDKWMAVQYPEAMGYFKRGDIPYYYALADAFTLCEAYHQSMMGPTNPNRLYHMSGRAAPSGDGKDVHIGNDMGDGTIGASGTVDWTTYPERLSAAGVDWRVYQEGGYRSSSLWYLYVDAYWKYRLQEQNNYDCNALAWFRNFKNAPRDSDLWQRAMLARGVDQLRKDVQENTLPQVSWIVAPYCYCEHPWWGPSFGEYYVTRVLEALTSNPEVWARTVFILNYDEGDGFYDHASAPVPPWKDGVGLSTVSTAGEIEVSSGLPIGLGHRVPLIAISPWSKGGKVSAEVFDHTSVLRFLERRFGVVEENISPWRRAVCGDLTSLFDFQGAGDTQVAPDLTNVPQSDARKEDAYWQQFYRPSPKYWSYEPKSLPGQEKGQRPTLAVPYQLHATLALDIAAGKLRLTLGNDGMSLPGNPQGHSAAVFQVQPREVGNPRFYTVTSYPVVQESGEELGRTLNDELDDLLDANGRYAFEVHGPNGFFREFHGNLHLAAQMARPEVSVTYQRNGNLQLNIRNLGRLPCSVTVTPNPAYTREGSRRYELEPNQAISEVWLLRSSQGWYDLSVTASNTEANYLRRLAGHVETGKPSRSDPLLDIAAT.

The segment at residues 1–38 (MTENWKFRRRTFLKHGAQAATLAGLSGLFPETLRRALA) is a signal peptide (tat-type signal).

Belongs to the bacterial phospholipase C family. Predicted to be exported by the Tat system. The position of the signal peptide cleavage has not been experimentally proven.

The catalysed reaction is a 1,2-diacyl-sn-glycero-3-phosphocholine + H2O = phosphocholine + a 1,2-diacyl-sn-glycerol + H(+). Its function is as follows. Hydrolyzes sphingomyelin in addition to phosphatidylcholine. The sequence is that of Hemolytic phospholipase C (plcH) from Pseudomonas aeruginosa (strain ATCC 15692 / DSM 22644 / CIP 104116 / JCM 14847 / LMG 12228 / 1C / PRS 101 / PAO1).